The chain runs to 760 residues: Semaphorin-4A (760 aa).

The signal sequence occupies residues methionine 1–glycine 32. The Extracellular portion of the chain corresponds to threonine 33 to histidine 682. A Sema domain is found at glutamine 36–arginine 494. A disulfide bridge links cysteine 113 with cysteine 124. N-linked (GlcNAc...) asparagine glycans are attached at residues asparagine 120 and asparagine 135. Intrachain disulfides connect cysteine 142/cysteine 151, cysteine 269/cysteine 379, and cysteine 293/cysteine 339. N-linked (GlcNAc...) asparagine glycosylation is present at asparagine 496. Residues asparagine 496–threonine 547 form the PSI domain. 3 cysteine pairs are disulfide-bonded: cysteine 497-cysteine 514, cysteine 506-cysteine 523, and cysteine 579-cysteine 623. Residues asparagine 572–tyrosine 630 form the Ig-like C2-type domain. Asparagine 606 carries N-linked (GlcNAc...) asparagine glycosylation. The helical transmembrane segment at phenylalanine 683–alanine 703 threads the bilayer. The Cytoplasmic portion of the chain corresponds to serine 704–alanine 760. Positions methionine 720–alanine 760 are disordered. Residues proline 723–serine 744 show a composition bias toward basic and acidic residues.

The protein belongs to the semaphorin family. In terms of assembly, interacts with PLXNB1, PLXNB2 and PLXNB3. Interacts with PLXND1. Interacts with TIMD2. In terms of tissue distribution, expressed in neurons and glia in the developing hippocampus.

Its subcellular location is the cell membrane. Its function is as follows. Cell surface receptor for PLXNB1, PLXNB2, PLXNB3 and PLXND1 that plays an important role in cell-cell signaling. Regulates glutamatergic and GABAergic synapse development. Promotes the development of inhibitory synapses in a PLXNB1-dependent manner and promotes the development of excitatory synapses in a PLXNB2-dependent manner. Plays a role in priming antigen-specific T-cells, promotes differentiation of Th1 T-helper cells, and thereby contributes to adaptive immunity. Promotes phosphorylation of TIMD2. Inhibits angiogenesis. Promotes axon growth cone collapse. Inhibits axonal extension by providing local signals to specify territories inaccessible for growing axons. The polypeptide is Semaphorin-4A (Sema4a) (Mus musculus (Mouse)).